We begin with the raw amino-acid sequence, 127 residues long: MTITMLKSKIHRATVTEANLNYVGSITIDKALMDKSNILEYEKVQIVDIDNGNRFETYVIAGEENSGVICLNGAAARMVQKGDKIIIMSYCSLTIDEANKFNPTVLFVDNKNNIEKLTNYEKHGEII.

Residue serine 25 is the Schiff-base intermediate with substrate; via pyruvic acid of the active site. Serine 25 is modified (pyruvic acid (Ser)). Residue threonine 57 participates in substrate binding. Catalysis depends on tyrosine 58, which acts as the Proton donor. 73-75 (GAA) contributes to the substrate binding site.

The protein belongs to the PanD family. In terms of assembly, heterooctamer of four alpha and four beta subunits. The cofactor is pyruvate. Post-translationally, is synthesized initially as an inactive proenzyme, which is activated by self-cleavage at a specific serine bond to produce a beta-subunit with a hydroxyl group at its C-terminus and an alpha-subunit with a pyruvoyl group at its N-terminus.

It localises to the cytoplasm. It catalyses the reaction L-aspartate + H(+) = beta-alanine + CO2. It participates in cofactor biosynthesis; (R)-pantothenate biosynthesis; beta-alanine from L-aspartate: step 1/1. Its function is as follows. Catalyzes the pyruvoyl-dependent decarboxylation of aspartate to produce beta-alanine. The sequence is that of Aspartate 1-decarboxylase from Clostridium botulinum (strain Loch Maree / Type A3).